Here is a 350-residue protein sequence, read N- to C-terminus: MPVLHNRISNDALKAKMLAESEPRTTISFYKYFHIADPKATRDALYQLFTALNVFGRVYLAHEGINAQISVPASNVETFRAQLYAFDSALDGLRLNIALDDDGKSFWVLRMKVRDRIVADGIDDPHFDASNVGEYLQAAEVNAMLDDPDALFIDMRNHYEYEVGHFENALEIPADTFREQLPKAVEMMQAHKDKKIVMYCTGGIRCEKASAWMKHNGFNKVWHIEGGIIEYARKAREQGLPVRFIGKNFVFDERMGERISDEIIAHCHQCGAPCDSHTNCKNDGCHLLFIQCPVCAEKYKGCCSEICCEESALPPEEQRRRRAGRENGNKIFNKSRGRLNTTLGIPDPTE.

Residues 146-240 form the Rhodanese domain; sequence DDPDALFIDM…YARKAREQGL (95 aa). The Cysteine persulfide intermediate role is filled by Cys-200.

It belongs to the TrhO family.

It carries out the reaction uridine(34) in tRNA + AH2 + O2 = 5-hydroxyuridine(34) in tRNA + A + H2O. Functionally, catalyzes oxygen-dependent 5-hydroxyuridine (ho5U) modification at position 34 in tRNAs, the first step in 5-carboxymethoxyuridine (cmo5U) biosynthesis. May be part of an alternate pathway, which is able to bypass cmo5U biogenesis in a subset of tRNAs under aerobic conditions. The chain is tRNA uridine(34) hydroxylase from Escherichia coli O9:H4 (strain HS).